The following is a 417-amino-acid chain: Biofilm dispersion protein BdlA (417 aa).

The region spanning 1 to 66 is the PAS 1 domain; that stretch reads MAALDRSMAR…RRFWERLRRG (66 aa). Positions 67-114 constitute a PAC 1 domain; that stretch reads EHFSGRCKRITREGRPLWLEATYNPVRDGQGRLLKVVKYASDIDAIVH. A PAS 2 domain is found at 115 to 188; that stretch reads QEHEMQSKLD…ADLWRRLNRG (74 aa). Residues 191–241 form the PAC 2 domain; that stretch reads VTGQFRRVHRNGQPVWLEASYNPVYDADGKLYKVVKFASDVSDRMRRYQAE. The Methyl-accepting transducer domain maps to 242-417; sequence ADNAHQAHTL…QFSRTLNADL (176 aa).

Essential for biofilm dispersion by sensing environmental cues. May be involved in sensing and transducing signals within cells, resulting in the modulation of c-di-GMP levels, swimming motility and adhesiveness of the bacterial cell surface. The sequence is that of Biofilm dispersion protein BdlA (bdlA) from Pseudomonas aeruginosa (strain ATCC 15692 / DSM 22644 / CIP 104116 / JCM 14847 / LMG 12228 / 1C / PRS 101 / PAO1).